A 285-amino-acid polypeptide reads, in one-letter code: MGNLFCCVLVKQSDVAVKERFGKFQKVLNPGLQFVPWVIGDYVAGTLTLRLQQLDVQCETKTKDNVFVTVVASIQYRVLADKASDAFYRLSNPTTQIKAYVFDVIRACVPKLNLDDVFEQKNEIAKSVEEELDKAMTAYGYEILQTLIIDIEPDQQVKRAMNEINAAARMRVAASEKAEAEKIIQIKRAEGEAESKYLSGLGIARQRQAIVDGLRDSVLGFAGNVPGTSAKDVLDMVMMTQYFDTMRDIGATSKSSAVFIPHGPGAVSDVAAQIRNGLLQANNAS.

A lipid anchor (N-myristoyl glycine) is attached at Gly2. Coiled coils occupy residues 113-139 (NLDD…MTAY) and 165-185 (NAAA…KIIQ).

Self-interacts and forms heteromers. Interacts with NB-LRR class of R proteins before R proteins (e.g. RPS2 or RPM1) are activated by the effectors.

The protein resides in the cell membrane. The polypeptide is Hypersensitive-induced response protein 3 (HIR3) (Arabidopsis thaliana (Mouse-ear cress)).